A 148-amino-acid polypeptide reads, in one-letter code: uncharacterized protein (148 aa).

A signal peptide spans 1 to 19; the sequence is MLSNAKLLLSLAMASTALG. N-linked (GlcNAc...) asparagine glycosylation is found at asparagine 41 and asparagine 59. The GPI-anchor amidated asparagine moiety is linked to residue asparagine 127. Residues 128 to 148 constitute a propeptide, removed in mature form; sequence AANARAIPGALGLAGAVMMLL.

The protein belongs to the SED1 family. Post-translationally, the GPI-anchor is attached to the protein in the endoplasmic reticulum and serves to target the protein to the cell surface. There, the glucosamine-inositol phospholipid moiety is cleaved off and the GPI-modified mannoprotein is covalently attached via its lipidless GPI glycan remnant to the 1,6-beta-glucan of the outer cell wall layer.

It is found in the secreted. Its subcellular location is the cell wall. The protein localises to the membrane. Functionally, cell wall protein that plays a role in adaptation and resistance to cell wall stress. This is an uncharacterized protein from Saccharomyces cerevisiae (strain ATCC 204508 / S288c) (Baker's yeast).